The chain runs to 687 residues: Glycine--tRNA ligase beta subunit (687 aa).

The protein belongs to the class-II aminoacyl-tRNA synthetase family. Tetramer of two alpha and two beta subunits.

The protein localises to the cytoplasm. The enzyme catalyses tRNA(Gly) + glycine + ATP = glycyl-tRNA(Gly) + AMP + diphosphate. This is Glycine--tRNA ligase beta subunit from Citrifermentans bemidjiense (strain ATCC BAA-1014 / DSM 16622 / JCM 12645 / Bem) (Geobacter bemidjiensis).